We begin with the raw amino-acid sequence, 477 residues long: Acylamidase (477 aa).

Catalysis depends on charge relay system residues lysine 82 and serine 157. Catalysis depends on serine 181, which acts as the Acyl-ester intermediate.

The protein belongs to the amidase family.

The enzyme catalyses a monocarboxylic acid amide + H2O = a monocarboxylate + NH4(+). It catalyses the reaction an anilide + H2O = aniline + a carboxylate + H(+). It carries out the reaction an N-acyl-L-amino acid + H2O = an L-alpha-amino acid + a carboxylate. The catalysed reaction is an N-acetyl-L-cysteine-S-conjugate + H2O = an S-substituted L-cysteine + acetate. Amidase activity is completely suppressed by inhibitors of serine proteases (phenylmethylsulfonyl fluoride and diisopropyl fluorophosphate), partially inhibited by copper and mercury ions, but is not affected by inhibitors of aliphatic amidases (acetaldehyde and nitrophenyl disulfides) or by EDTA. Amidase with broad substrate specificity, catalyzing the hydrolysis of a wide range of N-substituted amides, and, to a lesser extent, the hydrolysis of non-substituted amides. Acid para-nitroanilides (4'-nitroacetanilide, Gly-pNA, Ala-pNA, Leu-pNA) are the best substrates for this enzyme. N-substituted acrylamides (isopropyl acrylamide, N,N-dimethyl-aminopropyl acrylamide, and methylene-bis-acrylamide), N-acetyl derivatives of glycine, alanine and leucine, and aliphatic amides (acetamide, acrylamide, isobutyramide, n-butyramide, and valeramide) can also be used as substrates but with less efficiency. The protein is Acylamidase of Rhodococcus erythropolis (Arthrobacter picolinophilus).